We begin with the raw amino-acid sequence, 981 residues long: Calsyntenin-1 (981 aa).

Positions 1–28 (MLRRPAPALAPAARLLLAGLLCGGGVWA) are cleaved as a signal peptide. Residues 29–859 (ARVNKHKPWL…PHPFAVVPST (831 aa)) are Extracellular-facing. Cadherin domains lie at 38 to 164 (LEPT…APVF) and 165 to 265 (KEKS…TPGW). Asn-346, Asn-366, and Asn-515 each carry an N-linked (GlcNAc...) asparagine glycan. The helical transmembrane segment at 860–880 (ATVVIVVCVSFLVFMIILGVF) threads the bilayer. At 881–981 (RIRAAHRRTM…LEWDDSTLSY (101 aa)) the chain is on the cytoplasmic side. The tract at residues 915-981 (METYEDQHSS…LEWDDSTLSY (67 aa)) is disordered. Over residues 925–960 (EEEEEEEEEEESEDGEEEDDITSAESESSEEEEGEQ) the composition is skewed to acidic residues. Over residues 962 to 981 (DPQNATRQQQLEWDDSTLSY) the composition is skewed to polar residues.

Belongs to the calsyntenin family. As to quaternary structure, directly interacts with APBA2. Forms a tripartite complex with APBA2 and APP. Interacts with KLC1. In terms of assembly, interacts with APBB1; this interaction stabilizes AlcICD metabolism. Interacts with PSEN1. Post-translationally, proteolytically processed under normal cellular conditions. A primary zeta-cleavage generates a large extracellular (soluble) N-terminal domain (sAlc) and a short C-terminal transmembrane fragment (CTF1). A secondary cleavage catalyzed by presenilin gamma-secretase within the transmembrane domain releases the beta-Alc-alpha chain in the extracellular milieu and produces an intracellular fragment (AlcICD). This processing is strongly suppressed in the tripartite complex formed with APBA2 and APP, which seems to prevent the association with PSEN1. Expressed in the brain and, a lower level, in the heart, skeletal muscle, kidney and placenta. Accumulates in dystrophic neurites around the amyloid core of Alzheimer disease senile plaques (at protein level).

The protein resides in the postsynaptic cell membrane. The protein localises to the endoplasmic reticulum membrane. It localises to the golgi apparatus membrane. It is found in the cell projection. Its subcellular location is the neuron projection. The protein resides in the nucleus. In terms of biological role, postsynaptic adhesion molecule that binds to presynaptic neurexins to mediate both excitatory and inhibitory synapse formation. Promotes synapse development by acting as a cell adhesion molecule at the postsynaptic membrane, which associates with neurexin-alpha at the presynaptic membrane. Also functions as a cargo in axonal anterograde transport by acting as a molecular adapter that promotes KLC1 association with vesicles. Complex formation with APBA2 and APP, stabilizes APP metabolism and enhances APBA2-mediated suppression of beta-APP40 secretion, due to the retardation of intracellular APP maturation. Functionally, as intracellular fragment AlcICD, suppresses APBB1-dependent transactivation stimulated by APP C-terminal intracellular fragment (AICD), most probably by competing with AICD for APBB1-binding. Its function is as follows. In complex with APBA2 and C99, a C-terminal APP fragment, abolishes C99 interaction with PSEN1 and thus APP C99 cleavage by gamma-secretase, most probably through stabilization of the direct interaction between APBA2 and APP. This chain is Calsyntenin-1, found in Homo sapiens (Human).